We begin with the raw amino-acid sequence, 397 residues long: F-box protein At3g49450 (397 aa).

An F-box domain is found at 26 to 75; it reads GENSGTLPTDLMVEILSRVPAKSAARFRCVSNDWNSLLRSPYLTNLFLKR.

This is F-box protein At3g49450 from Arabidopsis thaliana (Mouse-ear cress).